The chain runs to 102 residues: uncharacterized protein (102 aa).

The tract at residues Arg-77–Ile-102 is disordered.

This is an uncharacterized protein from Microplitis demolitor (Parasitoid wasp).